The sequence spans 210 residues: Somatotropin (210 aa).

An N-terminal signal peptide occupies residues methionine 1–alanine 22. Histidine 38 serves as a coordination point for Zn(2+). A disulfide bridge links cysteine 71 with cysteine 183. Glutamate 192 is a Zn(2+) binding site. The cysteines at positions 200 and 208 are disulfide-linked.

It belongs to the somatotropin/prolactin family.

The protein resides in the secreted. Growth hormone plays an important role in growth control and is involved in the regulation of several anabolic processes. Implicated as an osmoregulatory substance important for seawater adaptation. The polypeptide is Somatotropin (gh) (Oncorhynchus kisutch (Coho salmon)).